The chain runs to 335 residues: Glyceraldehyde-3-phosphate dehydrogenase, cytosolic (335 aa).

NAD(+) is bound by residues Arg13–Ile14, Asp35, and Arg80. D-glyceraldehyde 3-phosphate contacts are provided by residues Ser151–Thr153, Thr182, Thr211–Gly212, and Arg234. Cys152 functions as the Nucleophile in the catalytic mechanism. Asn316 contributes to the NAD(+) binding site.

It belongs to the glyceraldehyde-3-phosphate dehydrogenase family. Homotetramer.

Its subcellular location is the cytoplasm. The enzyme catalyses D-glyceraldehyde 3-phosphate + phosphate + NAD(+) = (2R)-3-phospho-glyceroyl phosphate + NADH + H(+). It participates in carbohydrate degradation; glycolysis; pyruvate from D-glyceraldehyde 3-phosphate: step 1/5. This is Glyceraldehyde-3-phosphate dehydrogenase, cytosolic (GAPC) from Gracilaria gracilis (Red alga).